We begin with the raw amino-acid sequence, 588 residues long: Protein cereblon (588 aa).

Disordered stretches follow at residues 1–107 (MDDE…DDSD) and 159–197 (QERR…DIGF). The span at 41 to 50 (AWNNATQDEQ) shows a compositional bias: polar residues. Positions 75–85 (MVEDVLQDDTA) are enriched in acidic residues. The segment covering 86–96 (SEGSHPSSDMS) has biased composition (polar residues). Basic and acidic residues predominate over residues 159 to 168 (QERRRSRTSE). Residues 181–192 (NDPPPQQPPRPP) are compositionally biased toward pro residues. One can recognise a Lon N-terminal domain in the interval 228-454 (HMLIFLHQHI…LIKSTFKDES (227 aa)). The CULT domain occupies 453 to 562 (ESLFFCRYCN…LAGSSVRIGK (110 aa)). Zn(2+)-binding residues include Cys-458, Cys-461, Cys-527, and Cys-530.

It belongs to the CRBN family. As to quaternary structure, likely a component of a DCX (DDB1-CUL4-X-box) protein ligase complex. May interact with pic/DDB1. In terms of processing, ubiquitinated.

Its subcellular location is the nucleus. It functions in the pathway protein modification; protein ubiquitination. Functionally, substrate recognition component of a DCX (DDB1-CUL4-X-box) E3 protein ligase complex that mediates the ubiquitination and subsequent proteasomal degradation of target proteins. Has an essential role in mediating growth by negatively regulating insulin signaling. It also has a role in maintaining presynaptic function in the neuromuscular junction synapses of third-instar larvae. The polypeptide is Protein cereblon (Drosophila yakuba (Fruit fly)).